Here is a 146-residue protein sequence, read N- to C-terminus: MEMDKRMKSLAMTAFFGELNTLDIMALIMSIFKRHPNNTIFSVDKDGQFIIDFEYDNYKASQYLDLTLTPISGDECKTHASSIAEQLACVDIIKEDISEYIKTTPRLKRFIKKYRNRSDTRISRDTEKLKIALAKGIDYEYIKDAC.

A helical membrane pass occupies residues 10–32 (LAMTAFFGELNTLDIMALIMSIF).

This sequence belongs to the chordopoxvirinae H7 family.

It is found in the membrane. In terms of biological role, contributes to the formation of crescents and immature virions (IV). The protein is Late protein H7 of Vaccinia virus (strain Tian Tan) (VACV).